Here is a 93-residue protein sequence, read N- to C-terminus: YcgL domain-containing protein KPN78578_22820 (93 aa).

In terms of domain architecture, YcgL spans 1-85 (MFCVIYRSTK…PSENLLKKHL (85 aa)).

The protein is YcgL domain-containing protein KPN78578_22820 of Klebsiella pneumoniae subsp. pneumoniae (strain ATCC 700721 / MGH 78578).